We begin with the raw amino-acid sequence, 516 residues long: Multicopper oxidase CueO (516 aa).

A signal peptide (tat-type signal) is located at residues 1–28 (MQRRDFLKYSVALGVASALPLWSRAVFA). Plastocyanin-like domains follow at residues 55–165 (GQST…IEDD) and 227–292 (PRGW…DNKP). His-101, His-103, His-141, and His-143 together coordinate Cu cation. Residues 355–400 (MDPMLDMMGMQMLMEKYGDQAMAGMDHSQMMGHMGHGNMNHMNHGG) form a methionine-rich region region. In terms of domain architecture, Plastocyanin-like 3 spans 402 to 516 (FDFHHANKIN…DTGMMLGFTV (115 aa)). His-443, His-446, His-448, His-499, Cys-500, His-501, and His-505 together coordinate Cu cation.

This sequence belongs to the multicopper oxidase family. In terms of assembly, monomer. Requires Cu cation as cofactor. Exported by the Tat system. The position of the signal peptide cleavage has been experimentally proven.

The protein localises to the periplasm. It catalyses the reaction 4 Cu(+) + O2 + 4 H(+) = 4 Cu(2+) + 2 H2O. Ferroxidase and phenoloxidase activities are enhanced considerably in the presence of excess copper ions. A labile regulatory copper ion near the T1 copper site is important for the copper associated activation of enzyme activity. Ag(+) acts as a potent inhibitor of oxidase activity by binding at Cu(+) binding sites, blocking Cu(+) substrate binding and oxidation. pPD oxidase activity is strongly inhibited by sodium azide, an inhibitor of the electron transfer. Its function is as follows. Multicopper oxidase involved in copper homeostasis and copper tolerance under aerobic conditions. Is responsible for the oxidation of Cu(+) to the less harmful Cu(2+) in the periplasm, thereby preventing Cu(+) from entering the cytoplasm. Probably primarily functions as a cuprous oxidase in vivo. In vitro, in the presence of excess copper ions, exhibits ferroxidase and phenoloxidase activities. Fe(2+) is an excellent substrate in the presence of excess Cu(2+), but is inactive in the absence of Cu(2+). Oxidizes the phenolate iron siderophores enterobactin, 2,3-dihydroxybenzoate (2,3-DHB) and 3-hydroxyanthranilate (3-HAA). Oxidation and thus inactivation of enterobactin could protect cells from the interaction of enterobactin with copper and play a central role as an interface between copper detoxification and iron homeostasis. Also oxidizes a variety of phenolic model substrates, including 2,2'-azinobis(3-ethylbenzthiazolinesulfonic acid) (ABTS), p-phenylenediamine (pPD), 2,6-dimethoxyphenol (2,6-DMP) and 3,4-dihydroxybenzoic acid (3,4-DHB). In Escherichia coli (strain K12), this protein is Multicopper oxidase CueO.